Consider the following 130-residue polypeptide: Flagellar assembly factor FliW (130 aa).

Belongs to the FliW family. As to quaternary structure, interacts with translational regulator CsrA and flagellin(s).

The protein localises to the cytoplasm. Functionally, acts as an anti-CsrA protein, binds CsrA and prevents it from repressing translation of its target genes, one of which is flagellin. Binds to flagellin and participates in the assembly of the flagellum. This chain is Flagellar assembly factor FliW, found in Borrelia turicatae (strain 91E135).